We begin with the raw amino-acid sequence, 906 residues long: Cadherin-2A (906 aa).

The signal sequence occupies residues 1–28 (MCRKEPFLLPTALCILAALVLHQGPVEA). The propeptide occupies 29 to 160 (LGGSRLCKTG…KHNGLQRQKR (132 aa)). Cadherin domains follow at residues 161 to 268 (DWVI…RPEF), 269 to 383 (LHQI…PPEF), 384 to 498 (TAMT…NPYF), 499 to 604 (TPNP…DNAP), and 605 to 714 (YVYP…TTAP). At 161–724 (DWVIPPINVP…IIGTGLGTGA (564 aa)) the chain is on the extracellular side. Ca(2+) contacts are provided by Glu171, Asp227, Glu229, Asp260, Met261, Asn262, Asp263, and Asn264. N-linked (GlcNAc...) asparagine glycosylation is present at Asn274. 3 residues coordinate Ca(2+): Asp294, Asp296, and Asn302. The N-linked (GlcNAc...) asparagine glycan is linked to Asn326. Asp354 contributes to the Ca(2+) binding site. N-linked (GlcNAc...) asparagine glycosylation is found at Asn403, Asn573, Asn623, Asn652, and Asn693. A helical membrane pass occupies residues 725–746 (IIAILLCIIILLTLVLMFVVWM). Over 747 to 906 (KRRDKERQAK…LADMYGGSDD (160 aa)) the chain is Cytoplasmic. 2 disordered regions span residues 775 to 800 (EEGG…EPDT) and 863 to 884 (SGST…EQDY). Acidic residues predominate over residues 776–785 (EGGGEEDQDY). Low complexity predominate over residues 863–880 (SGSTAGSLSSLNSSSSGG).

In terms of assembly, homodimer (via extracellular region). Can also form heterodimers with other cadherins (via extracellular region). Dimerization occurs in trans, i.e. with a cadherin chain from another cell.

It localises to the cell membrane. Its subcellular location is the sarcolemma. The protein localises to the cell junction. It is found in the cell surface. The protein resides in the desmosome. It localises to the adherens junction. Its function is as follows. Calcium-dependent cell adhesion protein; preferentially mediates homotypic cell-cell adhesion. Cadherins may thus contribute to the sorting of heterogeneous cell types, and thereby play an important role during embryonic development. Required for proper neurite branching. Required for pre- and postsynaptic organization. The polypeptide is Cadherin-2A (cdh2-a) (Xenopus laevis (African clawed frog)).